The sequence spans 636 residues: Threonine--tRNA ligase (636 aa).

The TGS domain occupies 1 to 63 (MNEINVTLPD…ADGARVEIVT (63 aa)). Residues 243–534 (DHRKLGRELD…LIEHFAGNFP (292 aa)) form a catalytic region. Zn(2+) contacts are provided by Cys335, His386, and His511.

It belongs to the class-II aminoacyl-tRNA synthetase family. As to quaternary structure, homodimer. It depends on Zn(2+) as a cofactor.

Its subcellular location is the cytoplasm. The catalysed reaction is tRNA(Thr) + L-threonine + ATP = L-threonyl-tRNA(Thr) + AMP + diphosphate + H(+). Its function is as follows. Catalyzes the attachment of threonine to tRNA(Thr) in a two-step reaction: L-threonine is first activated by ATP to form Thr-AMP and then transferred to the acceptor end of tRNA(Thr). Also edits incorrectly charged L-seryl-tRNA(Thr). In Geobacter sp. (strain M21), this protein is Threonine--tRNA ligase.